The primary structure comprises 264 residues: 3-methyl-2-oxobutanoate hydroxymethyltransferase (264 aa).

Mg(2+)-binding residues include aspartate 45 and aspartate 84. 3-methyl-2-oxobutanoate-binding positions include 45-46 (DS), aspartate 84, and lysine 112. Glutamate 114 provides a ligand contact to Mg(2+). Catalysis depends on glutamate 181, which acts as the Proton acceptor.

It belongs to the PanB family. Homodecamer; pentamer of dimers. It depends on Mg(2+) as a cofactor.

It localises to the cytoplasm. It carries out the reaction 3-methyl-2-oxobutanoate + (6R)-5,10-methylene-5,6,7,8-tetrahydrofolate + H2O = 2-dehydropantoate + (6S)-5,6,7,8-tetrahydrofolate. The protein operates within cofactor biosynthesis; (R)-pantothenate biosynthesis; (R)-pantoate from 3-methyl-2-oxobutanoate: step 1/2. In terms of biological role, catalyzes the reversible reaction in which hydroxymethyl group from 5,10-methylenetetrahydrofolate is transferred onto alpha-ketoisovalerate to form ketopantoate. This chain is 3-methyl-2-oxobutanoate hydroxymethyltransferase, found in Shewanella sediminis (strain HAW-EB3).